Reading from the N-terminus, the 243-residue chain is uncharacterized protein (243 aa).

The N-terminal stretch at 1-16 is a signal peptide; it reads MKHFIILFLLLFVTAG. Cys-17 carries the N-palmitoyl cysteine lipid modification. Cys-17 carries S-diacylglycerol cysteine lipidation.

The protein resides in the cell membrane. This is an uncharacterized protein from Bacillus subtilis (strain 168).